A 323-amino-acid polypeptide reads, in one-letter code: Fructose-1,6-bisphosphatase class 1 (323 aa).

Mg(2+) contacts are provided by glutamate 84, aspartate 103, leucine 105, and aspartate 106. Residues 106–109 (DGSS), asparagine 198, and lysine 264 contribute to the substrate site. Residue glutamate 270 coordinates Mg(2+).

This sequence belongs to the FBPase class 1 family. As to quaternary structure, homotetramer. Mg(2+) serves as cofactor.

The protein resides in the cytoplasm. It catalyses the reaction beta-D-fructose 1,6-bisphosphate + H2O = beta-D-fructose 6-phosphate + phosphate. Its pathway is carbohydrate biosynthesis; gluconeogenesis. This is Fructose-1,6-bisphosphatase class 1 from Cellvibrio japonicus (strain Ueda107) (Pseudomonas fluorescens subsp. cellulosa).